The sequence spans 192 residues: Probable GTP-binding protein EngB (192 aa).

Residues 22–192 enclose the EngB-type G domain; it reads NLPQIVIVGR…QVLSIFEKYA (171 aa). GTP-binding positions include 30-37, 57-61, 75-78, 142-145, and 173-175; these read GRSNVGKS, GKTRG, DLPG, TKAD, and FSA. Serine 37 and threonine 59 together coordinate Mg(2+).

The protein belongs to the TRAFAC class TrmE-Era-EngA-EngB-Septin-like GTPase superfamily. EngB GTPase family. Requires Mg(2+) as cofactor.

Functionally, necessary for normal cell division and for the maintenance of normal septation. The sequence is that of Probable GTP-binding protein EngB from Thermoanaerobacter pseudethanolicus (strain ATCC 33223 / 39E) (Clostridium thermohydrosulfuricum).